The following is an 86-amino-acid chain: Cell division topological specificity factor (86 aa).

The protein belongs to the MinE family.

Its function is as follows. Prevents the cell division inhibition by proteins MinC and MinD at internal division sites while permitting inhibition at polar sites. This ensures cell division at the proper site by restricting the formation of a division septum at the midpoint of the long axis of the cell. The polypeptide is Cell division topological specificity factor (Stenotrophomonas maltophilia (strain K279a)).